A 64-amino-acid polypeptide reads, in one-letter code: MVKHKAARICINLECIDCKSNLHKRSNGISRYTTIKNRKNNPSRMELKKFCPYCNMRTIHKEIK.

This sequence belongs to the bacterial ribosomal protein bL33 family.

It localises to the plastid. The protein resides in the chloroplast. This chain is Large ribosomal subunit protein bL33c (rpl33), found in Cyanidium caldarium (Red alga).